We begin with the raw amino-acid sequence, 509 residues long: Phytase A (509 aa).

The N-terminal stretch at 1 to 15 (MFLLMVPLFSYLAAA) is a signal peptide. C27 and C36 are disulfide-bonded. Residues Q46, Y47, R75, H76, R79, T82, and R164 each coordinate 1D-myo-inositol hexakisphosphate. 4 disulfide bridges follow: C65–C444, C216–C507, C266–C295, and C478–C486. Catalysis depends on H76, which acts as the Nucleophile. Residues N171 and N208 are each glycosylated (N-linked (GlcNAc...) asparagine). Residue K314 participates in 1D-myo-inositol hexakisphosphate binding. N-linked (GlcNAc...) asparagine glycosylation is found at N348, N352, and N367. H376 and D377 together coordinate 1D-myo-inositol hexakisphosphate. The N-linked (GlcNAc...) asparagine glycan is linked to N401.

The protein belongs to the histidine acid phosphatase family. In terms of assembly, monomer.

It is found in the secreted. It catalyses the reaction 1D-myo-inositol hexakisphosphate + H2O = 1D-myo-inositol 1,2,4,5,6-pentakisphosphate + phosphate. The catalysed reaction is 1D-myo-inositol 1,2,4,5,6-pentakisphosphate + H2O = 1D-myo-inositol 1,2,5,6-tetrakisphosphate + phosphate. The enzyme catalyses 1D-myo-inositol 1,2,5,6-tetrakisphosphate + H2O = 1D-myo-inositol 1,2,6-trisphosphate + phosphate. It carries out the reaction 1D-myo-inositol 1,2,6-trisphosphate + H2O = 1D-myo-inositol 1,2-bisphosphate + phosphate. It catalyses the reaction 1D-myo-inositol 1,2-bisphosphate + H2O = 1D-myo-inositol 2-phosphate + phosphate. Its function is as follows. Catalyzes the phosphate monoester hydrolysis of phytic acid (myo-inositol hexakisphosphate), which results in the stepwise formation of myo-inositol pentakis-, tetrakis-, tris-, bis-, and monophosphates, as well as the liberation of inorganic phosphate. Myo-inositol 2-monophosphate is the end product. Is also able to dephosphorylate the classic acid phosphatase substrate p-nitrophenyl phosphate. This chain is Phytase A (pht-1), found in Neurospora crassa (strain ATCC 24698 / 74-OR23-1A / CBS 708.71 / DSM 1257 / FGSC 987).